A 4114-amino-acid polypeptide reads, in one-letter code: Ferrichrome siderophore peptide synthetase (4114 aa).

Carrier domains follow at residues 797–874, 1947–2021, 3020–3093, and 3574–3650; these read DPAT…QSSG, TDSE…IDKL, TQSE…MQSS, and QALS…SQTN. O-(pantetheine 4'-phosphoryl)serine occurs at positions 835, 1982, 3054, and 3611. The interval 4040–4061 is disordered; sequence LDYSHHSQHSTHDRTPPSTPHV. Basic and acidic residues predominate over residues 4041–4054; the sequence is DYSHHSQHSTHDRT.

The protein belongs to the ATP-dependent AMP-binding enzyme family. It depends on pantetheine 4'-phosphate as a cofactor.

It functions in the pathway siderophore biosynthesis; ferrichrome biosynthesis. In terms of biological role, multidomain peptide synthetase involved in ferrichrome biosynthesis. This Mycosarcoma maydis (Corn smut fungus) protein is Ferrichrome siderophore peptide synthetase (SID2).